Reading from the N-terminus, the 408-residue chain is Endo-1,4-beta-xylanase A (408 aa).

A signal peptide spans 1-19 (MKLSASFAALALLLPFVQA). Residues 20–55 (QSPVWGQCGGIGWTGPTTCTAGNVCQEYSAYYSQCI) enclose the CBM1 domain. The segment at 64–89 (TSVSTAPNPPPTSHTSTSSAPSGAST) is disordered. The span at 76–89 (SHTSTSSAPSGAST) shows a compositional bias: low complexity. One can recognise a GH10 domain in the interval 88 to 405 (STSTAKLNTL…KPAYDGIAIG (318 aa)). Residue glutamate 222 is the Proton donor of the active site. The active-site Nucleophile is glutamate 327. Cysteine 355 and cysteine 361 are oxidised to a cystine.

Belongs to the glycosyl hydrolase 10 (cellulase F) family.

The protein resides in the secreted. The enzyme catalyses Endohydrolysis of (1-&gt;4)-beta-D-xylosidic linkages in xylans.. It participates in glycan degradation; xylan degradation. In terms of biological role, endo-1,4-beta-xylanase involved in the hydrolysis of xylan, a major structural heterogeneous polysaccharide found in plant biomass representing the second most abundant polysaccharide in the biosphere, after cellulose. This is Endo-1,4-beta-xylanase A (xynA) from Phanerodontia chrysosporium (White-rot fungus).